The primary structure comprises 227 residues: Ribose-5-phosphate isomerase A (227 aa).

Substrate is bound by residues 28–31 (TGST), 85–88 (DGAD), and 98–101 (KGGG). Glu-107 functions as the Proton acceptor in the catalytic mechanism. Lys-125 contributes to the substrate binding site.

The protein belongs to the ribose 5-phosphate isomerase family. Homodimer.

It catalyses the reaction aldehydo-D-ribose 5-phosphate = D-ribulose 5-phosphate. Its pathway is carbohydrate degradation; pentose phosphate pathway; D-ribose 5-phosphate from D-ribulose 5-phosphate (non-oxidative stage): step 1/1. In terms of biological role, catalyzes the reversible conversion of ribose-5-phosphate to ribulose 5-phosphate. This is Ribose-5-phosphate isomerase A from Limosilactobacillus reuteri (strain DSM 20016) (Lactobacillus reuteri).